A 105-amino-acid polypeptide reads, in one-letter code: Met repressor (105 aa).

The protein belongs to the MetJ family. In terms of assembly, homodimer.

Its subcellular location is the cytoplasm. Its function is as follows. This regulatory protein, when combined with SAM (S-adenosylmethionine) represses the expression of the methionine regulon and of enzymes involved in SAM synthesis. The chain is Met repressor from Histophilus somni (strain 129Pt) (Haemophilus somnus).